Reading from the N-terminus, the 127-residue chain is Large ribosomal subunit protein bL12 (127 aa).

It belongs to the bacterial ribosomal protein bL12 family. In terms of assembly, homodimer. Part of the ribosomal stalk of the 50S ribosomal subunit. Forms a multimeric L10(L12)X complex, where L10 forms an elongated spine to which 2 to 4 L12 dimers bind in a sequential fashion. Binds GTP-bound translation factors.

In terms of biological role, forms part of the ribosomal stalk which helps the ribosome interact with GTP-bound translation factors. Is thus essential for accurate translation. The protein is Large ribosomal subunit protein bL12 of Acidiphilium cryptum (strain JF-5).